The chain runs to 481 residues: 3-isopropylmalate dehydratase large subunit (481 aa).

Cys-357, Cys-417, and Cys-420 together coordinate [4Fe-4S] cluster.

This sequence belongs to the aconitase/IPM isomerase family. LeuC type 1 subfamily. As to quaternary structure, heterodimer of LeuC and LeuD. Requires [4Fe-4S] cluster as cofactor.

The catalysed reaction is (2R,3S)-3-isopropylmalate = (2S)-2-isopropylmalate. The protein operates within amino-acid biosynthesis; L-leucine biosynthesis; L-leucine from 3-methyl-2-oxobutanoate: step 2/4. Catalyzes the isomerization between 2-isopropylmalate and 3-isopropylmalate, via the formation of 2-isopropylmaleate. The protein is 3-isopropylmalate dehydratase large subunit of Mycolicibacterium gilvum (strain PYR-GCK) (Mycobacterium gilvum (strain PYR-GCK)).